Reading from the N-terminus, the 300-residue chain is Putative hydrolase ML2424 (300 aa).

The active-site Nucleophile is the D56. Residues D56, D58, and D231 each coordinate Mg(2+). D58 serves as the catalytic Proton donor.

This sequence belongs to the HAD-like hydrolase superfamily. SerB family. Mg(2+) is required as a cofactor.

The protein is Putative hydrolase ML2424 of Mycobacterium leprae (strain TN).